Here is a 184-residue protein sequence, read N- to C-terminus: Glutathione-regulated potassium-efflux system ancillary protein KefG (184 aa).

Belongs to the NAD(P)H dehydrogenase (quinone) family. KefG subfamily. In terms of assembly, interacts with KefB.

It localises to the cell inner membrane. The enzyme catalyses a quinone + NADH + H(+) = a quinol + NAD(+). It carries out the reaction a quinone + NADPH + H(+) = a quinol + NADP(+). Regulatory subunit of a potassium efflux system that confers protection against electrophiles. Required for full activity of KefB. This chain is Glutathione-regulated potassium-efflux system ancillary protein KefG, found in Cronobacter sakazakii (strain ATCC BAA-894) (Enterobacter sakazakii).